Here is a 217-residue protein sequence, read N- to C-terminus: Thymidylate kinase (217 aa).

11-18 (GLEGAGKS) is an ATP binding site.

Belongs to the thymidylate kinase family.

It catalyses the reaction dTMP + ATP = dTDP + ADP. Its function is as follows. Phosphorylation of dTMP to form dTDP in both de novo and salvage pathways of dTTP synthesis. This chain is Thymidylate kinase, found in Alkalilimnicola ehrlichii (strain ATCC BAA-1101 / DSM 17681 / MLHE-1).